A 224-amino-acid chain; its full sequence is Thiamine-triphosphatase (224 aa).

Residue Ala2 is modified to N-acetylalanine. The CYTH domain occupies 5-201 (LIEVERKFAP…AKLMVYLQRF (197 aa)). Glu7 and Glu9 together coordinate Mg(2+). Positions 11, 55, 57, 65, and 125 each coordinate substrate. Asp145, Glu157, and Glu159 together coordinate Mg(2+). Glu157 is a binding site for substrate. Lys193 is a binding site for substrate.

The protein belongs to the ThTPase family. As to quaternary structure, monomer. Requires Mg(2+) as cofactor.

It is found in the cytoplasm. It carries out the reaction thiamine triphosphate + H2O = thiamine diphosphate + phosphate + H(+). Its function is as follows. Hydrolase highly specific for thiamine triphosphate (ThTP). The chain is Thiamine-triphosphatase (Thtpa) from Mus musculus (Mouse).